Reading from the N-terminus, the 161-residue chain is Eukaryotic translation initiation factor 5A-1 (161 aa).

Over residues 1–12 (MSDEEHQFESKA) the composition is skewed to basic and acidic residues. The tract at residues 1-21 (MSDEEHQFESKADAGASKTYP) is disordered. K52 carries the post-translational modification Hypusine.

The protein belongs to the eIF-5A family. In terms of processing, lys-52 undergoes hypusination, a unique post-translational modification that consists in the addition of a butylamino group from spermidine to lysine side chain, leading to the formation of the unusual amino acid hypusine. eIF-5As are the only known proteins to undergo this modification, which is essential for their function.

Functionally, translation factor that promotes translation elongation and termination, particularly upon ribosome stalling at specific amino acid sequence contexts. Binds between the exit (E) and peptidyl (P) site of the ribosome and promotes rescue of stalled ribosome: specifically required for efficient translation of polyproline-containing peptides as well as other motifs that stall the ribosome. Acts as a ribosome quality control (RQC) cofactor by joining the RQC complex to facilitate peptidyl transfer during CAT tailing step. In Medicago sativa (Alfalfa), this protein is Eukaryotic translation initiation factor 5A-1.